Here is a 367-residue protein sequence, read N- to C-terminus: Apolipoprotein A-V (367 aa).

A signal peptide spans 1–20 (MVAVLTWALALLSAFATVQT). A Phosphoserine modification is found at S56. Residues 71-90 (LGPLSGQGREPPGLPHDPEG) are disordered.

This sequence belongs to the apolipoprotein A1/A4/E family. Interacts with GPIHBP1. Interacts with SORL1; this interaction leads to APOA5 internalization and sorting either to lysosomes and degradation, or to the trans-Golgi network. In terms of processing, phosphorylated by FAM20C in the extracellular medium.

It is found in the secreted. The protein localises to the early endosome. Its subcellular location is the late endosome. The protein resides in the golgi apparatus. It localises to the trans-Golgi network. Minor apolipoprotein mainly associated with HDL and to a lesser extent with VLDL. May also be associated with chylomicrons. Important determinant of plasma triglyceride (TG) levels by both being a potent stimulator of apo-CII lipoprotein lipase (LPL) TG hydrolysis and an inhibitor of the hepatic VLDL-TG production rate (without affecting the VLDL-apoB production rate). Activates poorly lecithin:cholesterol acyltransferase (LCAT) and does not enhance efflux of cholesterol from macrophages. Binds heparin. In Leptonychotes weddellii (Weddell seal), this protein is Apolipoprotein A-V (APOA5).